The sequence spans 192 residues: Charged multivesicular body protein 1 (192 aa).

Coiled-coil stretches lie at residues glutamine 7–lysine 35 and asparagine 102–glutamine 125. The interval glutamine 164–asparagine 192 is disordered.

It belongs to the SNF7 family. Probable peripherally associated component of the endosomal sorting required for transport complex III (ESCRT-III).

It is found in the endosome membrane. Probable peripherally associated component of the endosomal sorting required for transport complex III (ESCRT-III) which is involved in multivesicular bodies (MVBs) formation and sorting of endosomal cargo proteins into MVBs. MVBs contain intraluminal vesicles (ILVs) that are generated by invagination and scission from the limiting membrane of the endosome and are delivered to lysosomes enabling degradation of membrane proteins. In Dictyostelium discoideum (Social amoeba), this protein is Charged multivesicular body protein 1 (chmp1).